The following is a 55-amino-acid chain: Lantibiotic epilancin 15X (55 aa).

Residues 1 to 24 constitute a propeptide, cleaved by ElxP; it reads MKKELFDLNLNKDIEAQKSDLNPQ. S25 is subject to D-lactate; by the dehydratase ElxB and the dehydrogenase ElxO. Position 27 is a 2,3-didehydroalanine (Ser); by the dehydratase ElxB (S27). A 2,3-didehydrobutyrine; by the dehydratase ElxB mark is found at T31 and T32. The lanthionine (Ser-Cys); by the dehydratase ElxB and the cyclase ElxC cross-link spans 36–40; the sequence is SKKLC. 2 consecutive cross-links (beta-methyllanthionine (Thr-Cys); by the dehydratase ElxB and the cyclase ElxC) follow at residues 44-47 and 46-49; these read TLTC and TCGC. T52 carries the post-translational modification 2,3-didehydrobutyrine; by the dehydratase ElxB.

Post-translationally, maturation of this lantibiotic involves the enzymatic conversion of Thr, and Ser into dehydrated AA by ElxB and the formation of thioether bonds with cysteine by the cyclase ElxC. The next steps are cleavage of the leader peptide by ElxP and membrane translocation by ElxT. The leader peptide may be removed before membrane translocation, in contrast to other lantibiotics for which the cleavage occur after translocation. This is suggested by the probable cytoplasmic localization of the serine protease ElxP that cleaves the leader peptide. In terms of processing, the N-terminal D-lactate is probably produced by dehydration of Ser-25 by ElxB, followed by proteolytic removal of the leader peptide by the serine protease ElxP and hydrolysis of the resulting new N-terminal dehydroalanine. This hydrolysis may occur spontaneously. The pyruvate group thus formed is reduced to D-lactate by the NADPH-dependent oxidoreductase ElxO. This N-terminal D-lactate protects the lantibiotic against degradation against aminopeptidase. It is not established whether the 2,3-didehydrobutyrines are the E- or Z-isomers.

In terms of biological role, lanthionine-containing peptide antibiotic (lantibiotic) active on Gram-positive bacteria such as staphylococci, enterococci and streptococci. The bactericidal activity of lantibiotics is based on depolarization of energized bacterial cytoplasmic membranes, initiated by the formation of aqueous transmembrane pores. The polypeptide is Lantibiotic epilancin 15X (Staphylococcus epidermidis).